Reading from the N-terminus, the 479-residue chain is uncharacterized protein (479 aa).

Helical transmembrane passes span Val25–Phe45, Ile63–Gly83, Leu110–Phe130, Gly133–Leu153, Val175–Ile195, Ile229–Leu249, Leu287–Ile307, and Leu328–Leu348.

In the C-terminal section; belongs to the GatC family.

The protein resides in the cell membrane. This is an uncharacterized protein from Mycoplasma pneumoniae (strain ATCC 29342 / M129 / Subtype 1) (Mycoplasmoides pneumoniae).